Consider the following 485-residue polypeptide: Telomeric DNA-binding factor trf1 (485 aa).

The segment covering Met-1–Ile-20 has biased composition (basic and acidic residues). Residues Met-1 to Glu-23 form a disordered region. The HTH myb-type domain occupies Arg-400–Ala-457. The H-T-H motif DNA-binding region spans Trp-428–Leu-453.

Homodimer.

The protein localises to the nucleus. In terms of biological role, binds the telomeric double-stranded TTACAGG repeat and regulates telomere length. The polypeptide is Telomeric DNA-binding factor trf1 (trf1) (Schizosaccharomyces pombe (strain 972 / ATCC 24843) (Fission yeast)).